A 279-amino-acid polypeptide reads, in one-letter code: Bis(5'-nucleosyl)-tetraphosphatase, symmetrical (279 aa).

It belongs to the Ap4A hydrolase family.

It carries out the reaction P(1),P(4)-bis(5'-adenosyl) tetraphosphate + H2O = 2 ADP + 2 H(+). In terms of biological role, hydrolyzes diadenosine 5',5'''-P1,P4-tetraphosphate to yield ADP. The polypeptide is Bis(5'-nucleosyl)-tetraphosphatase, symmetrical (Edwardsiella ictaluri (strain 93-146)).